A 364-amino-acid polypeptide reads, in one-letter code: Spermidine/putrescine import ATP-binding protein PotA (364 aa).

The ABC transporter domain occupies 10 to 244; sequence IEVVNVSKIF…PAERFVADFI (235 aa). Residue 46–53 coordinates ATP; the sequence is GPSGCGKT.

It belongs to the ABC transporter superfamily. Spermidine/putrescine importer (TC 3.A.1.11.1) family. As to quaternary structure, the complex is composed of two ATP-binding proteins (PotA), two transmembrane proteins (PotB and PotC) and a solute-binding protein (PotD).

The protein resides in the cell inner membrane. The enzyme catalyses ATP + H2O + polyamine-[polyamine-binding protein]Side 1 = ADP + phosphate + polyamineSide 2 + [polyamine-binding protein]Side 1.. Part of the ABC transporter complex PotABCD involved in spermidine/putrescine import. Responsible for energy coupling to the transport system. The polypeptide is Spermidine/putrescine import ATP-binding protein PotA (Mesorhizobium japonicum (strain LMG 29417 / CECT 9101 / MAFF 303099) (Mesorhizobium loti (strain MAFF 303099))).